A 109-amino-acid chain; its full sequence is Small ribosomal subunit protein bS18c (109 aa).

The segment at glycine 82 to phenylalanine 109 is disordered.

This sequence belongs to the bacterial ribosomal protein bS18 family. As to quaternary structure, part of the 30S ribosomal subunit.

Its subcellular location is the plastid. The protein is Small ribosomal subunit protein bS18c of Cuscuta reflexa (Southern Asian dodder).